Reading from the N-terminus, the 276-residue chain is Secretagogin (276 aa).

EF-hand domains lie at 12–47 (LDAAGFWQVWQRFDVEEKGYIEEKELDAFFYHMLTK), 71–93 (DVSKDGCIQMKELAGMFLSEDEN), 105–140 (DSSVEFMRIWRKYDADSSGFISAAELCNFLRDLFLH), 149–184 (KLEEYTGTMMKIFDKNKDGRLDLNDLARILALQENF), 197–232 (ERKRDFEKIFAHYDVSKTGALEGPEVDGFVKDMMEL), and 240–276 (VDLDKFREILLRHCDVNKDGKIQKSELALCLGLKINP). Ca(2+) is bound by residues D71, S73, D75, C77, E82, D118, D120, S122, E129, D162, N164, D166, R168, D173, D210, S212, T214, E221, D254, N256, D258, K260, and E265.

The protein localises to the cytoplasm. It localises to the secreted. It is found in the cytoplasmic vesicle. Its subcellular location is the secretory vesicle membrane. The chain is Secretagogin (SCGN) from Bos taurus (Bovine).